A 396-amino-acid chain; its full sequence is Elongation factor Tu 1 (396 aa).

In terms of domain architecture, tr-type G spans 10 to 206 (KPHVNIGTIG…AVDEYIPTPE (197 aa)). The G1 stretch occupies residues 19–26 (GHVDHGKT). 19 to 26 (GHVDHGKT) serves as a coordination point for GTP. T26 is a binding site for Mg(2+). Positions 60–64 (GITIN) are G2. The segment at 81–84 (DCPG) is G3. GTP-binding positions include 81–85 (DCPGH) and 136–139 (NKVD). The G4 stretch occupies residues 136–139 (NKVD). The interval 174 to 176 (SAL) is G5.

It belongs to the TRAFAC class translation factor GTPase superfamily. Classic translation factor GTPase family. EF-Tu/EF-1A subfamily. As to quaternary structure, monomer.

The protein resides in the cytoplasm. The enzyme catalyses GTP + H2O = GDP + phosphate + H(+). In terms of biological role, GTP hydrolase that promotes the GTP-dependent binding of aminoacyl-tRNA to the A-site of ribosomes during protein biosynthesis. This is Elongation factor Tu 1 from Hyphomonas neptunium (strain ATCC 15444).